We begin with the raw amino-acid sequence, 177 residues long: ATP-dependent protease subunit HslV (177 aa).

T6 is an active-site residue. Na(+) contacts are provided by A162, C165, and T168.

Belongs to the peptidase T1B family. HslV subfamily. In terms of assembly, a double ring-shaped homohexamer of HslV is capped on each side by a ring-shaped HslU homohexamer. The assembly of the HslU/HslV complex is dependent on binding of ATP.

The protein localises to the cytoplasm. It carries out the reaction ATP-dependent cleavage of peptide bonds with broad specificity.. With respect to regulation, allosterically activated by HslU binding. Protease subunit of a proteasome-like degradation complex believed to be a general protein degrading machinery. This is ATP-dependent protease subunit HslV from Desulfovibrio desulfuricans (strain ATCC 27774 / DSM 6949 / MB).